A 425-amino-acid chain; its full sequence is Serine--tRNA ligase (425 aa).

An L-serine-binding site is contributed by 228–230; that stretch reads TAE. Residue 259-261 coordinates ATP; the sequence is RSE. Glutamate 282 is a binding site for L-serine. 346-349 contacts ATP; that stretch reads EIAS. Serine 382 lines the L-serine pocket.

It belongs to the class-II aminoacyl-tRNA synthetase family. Type-1 seryl-tRNA synthetase subfamily. As to quaternary structure, homodimer. The tRNA molecule binds across the dimer.

It is found in the cytoplasm. It catalyses the reaction tRNA(Ser) + L-serine + ATP = L-seryl-tRNA(Ser) + AMP + diphosphate + H(+). The enzyme catalyses tRNA(Sec) + L-serine + ATP = L-seryl-tRNA(Sec) + AMP + diphosphate + H(+). It functions in the pathway aminoacyl-tRNA biosynthesis; selenocysteinyl-tRNA(Sec) biosynthesis; L-seryl-tRNA(Sec) from L-serine and tRNA(Sec): step 1/1. Its function is as follows. Catalyzes the attachment of serine to tRNA(Ser). Is also able to aminoacylate tRNA(Sec) with serine, to form the misacylated tRNA L-seryl-tRNA(Sec), which will be further converted into selenocysteinyl-tRNA(Sec). This chain is Serine--tRNA ligase, found in Rickettsia peacockii (strain Rustic).